A 166-amino-acid chain; its full sequence is DNA polymerase epsilon subunit C (166 aa).

Positions 112-166 (SPEIDIESEDEVDEANEPEVGEPEVDEAEVEAEVEAEAAEPETHTLDEPRPESSS) are disordered. Over residues 115–151 (IDIESEDEVDEANEPEVGEPEVDEAEVEAEVEAEAAE) the composition is skewed to acidic residues. Positions 152–166 (PETHTLDEPRPESSS) are enriched in basic and acidic residues.

As to quaternary structure, heterotetramer. Consists of four subunits: POL2, DPB2, DPB3 and DPB4.

Its subcellular location is the nucleus. Functionally, as accessory component of the DNA polymerase epsilon (DNA polymerase II) participates in chromosomal DNA replication. In Kluyveromyces lactis (strain ATCC 8585 / CBS 2359 / DSM 70799 / NBRC 1267 / NRRL Y-1140 / WM37) (Yeast), this protein is DNA polymerase epsilon subunit C (DPB3).